A 219-amino-acid chain; its full sequence is 7-cyano-7-deazaguanine synthase (219 aa).

10–20 serves as a coordination point for ATP; the sequence is FSGGQDSTTCL. 4 residues coordinate Zn(2+): Cys-187, Cys-196, Cys-199, and Cys-202.

The protein belongs to the QueC family. As to quaternary structure, homodimer. It depends on Zn(2+) as a cofactor.

It carries out the reaction 7-carboxy-7-deazaguanine + NH4(+) + ATP = 7-cyano-7-deazaguanine + ADP + phosphate + H2O + H(+). Its pathway is purine metabolism; 7-cyano-7-deazaguanine biosynthesis. Its function is as follows. Catalyzes the ATP-dependent conversion of 7-carboxy-7-deazaguanine (CDG) to 7-cyano-7-deazaguanine (preQ(0)). The sequence is that of 7-cyano-7-deazaguanine synthase from Lysinibacillus sphaericus (strain C3-41).